Reading from the N-terminus, the 501-residue chain is Cryptochrome-1 (501 aa).

The 130-residue stretch at K5–C134 folds into the Photolyase/cryptochrome alpha/beta domain. Residues Y231 and T243–S247 contribute to the FAD site. R356 contributes to the ATP binding site. D386 and D388 together coordinate FAD. An ATP-binding site is contributed by D405.

The protein belongs to the DNA photolyase class-1 family. In terms of assembly, homodimer. FAD serves as cofactor. The cofactor is (6R)-5,10-methylene-5,6,7,8-tetrahydrofolate.

Mediates blue light-induced gene expression in addition to its role in blue light-dependent inhibition of stem growth. The sequence is that of Cryptochrome-1 (PHR1) from Sinapis alba (White mustard).